We begin with the raw amino-acid sequence, 232 residues long: Aquaporin Z (232 aa).

Helical transmembrane passes span 8-28 and 33-53; these read AFGTFWLVLGGCGSAVLAAGF and IGLLGVALAFGLTVLTMAFAI. Residues 62-64 carry the NPA 1 motif; that stretch reads NPA. Helical transmembrane passes span 84–104, 130–150, and 159–179; these read IIAQVIGGLIAGGILYVIATG, MLAALVSEIVMTMMFLIVIMG, and GFAPIAIGLCLTLIHLISIPV. The NPA 2 signature appears at 185 to 187; sequence NPA. Residues 201–221 traverse the membrane as a helical segment; sequence VSQLWLFWVAPIVGGVLGAVI.

This sequence belongs to the MIP/aquaporin (TC 1.A.8) family. As to quaternary structure, homotetramer.

It is found in the cell inner membrane. It catalyses the reaction H2O(in) = H2O(out). Its function is as follows. Channel that permits osmotically driven movement of water in both directions. It is involved in the osmoregulation and in the maintenance of cell turgor during volume expansion in rapidly growing cells. It mediates rapid entry or exit of water in response to abrupt changes in osmolarity. The protein is Aquaporin Z of Vibrio parahaemolyticus serotype O3:K6 (strain RIMD 2210633).